Here is a 161-residue protein sequence, read N- to C-terminus: Terminase, small subunit (161 aa).

Residues 37–60 (KAEPFWHDNIRSKALDSWTPADLL) are helix-turn-helix (HTH). The stretch at 88-115 (EERDEGLIKDLRKQIVELQRTILAQRRD) forms a coiled coil. Residues lysine 96, lysine 100, arginine 107, arginine 114, and arginine 128 each coordinate DNA.

This sequence belongs to the Hendrixvirinae small terminase family. As to quaternary structure, homononamer; forms a ring-like structure through which genomic DNA is translocated into the capsid. Interacts with the terminase small subunit; the active complex is composed of a pentamer ring of terminase large subunits and a nonamer ring of terminase small subunits. Binds a specific sequence on the viral genome. DNA transits through the central tunnel formed by the small subunit and sequence-specific recognition for packaging initiation and termination takes place as it emerges.

In terms of biological role, the terminase small subunit binds to the packaging initiation site and regulates the ATPase activity of the terminase large subunit. The terminase lies at a unique vertex of the procapsid and is composed of two subunits, a small terminase subunit involved in viral DNA recognition (packaging sequence), and a large terminase subunit possessing endonucleolytic and ATPase activities. Both terminase subunits heterooligomerize and are docked on the portal protein to form the packaging machine. Packaging initiates by TerS recognizing the packaging sequence in the viral DNA. The nuclease activity of TerL cuts the viral DNA and the terminase-DNA complex binds to the portal of a procapsid shell. DNA is translocated into the capsid, powered by the packaging ATPase in TerL, which continues until the next site is encountered at which point the motor stops and again cuts the DNA to release the nucleocapsid filled with a unit-length genome ('unit length' packaging). This chain is Terminase, small subunit (1), found in Escherichia coli (Bacteriophage HK97).